The chain runs to 144 residues: Large ribosomal subunit protein uL15 (144 aa).

Residues 1-54 (MRLNTIKPGEGSKKTAKRVGRGIGSGLGKTCGRGHKGQKSRSGGFHKVGFEGGQ) form a disordered region. Residues 21–31 (RGIGSGLGKTC) are compositionally biased toward gly residues.

This sequence belongs to the universal ribosomal protein uL15 family. In terms of assembly, part of the 50S ribosomal subunit.

Binds to the 23S rRNA. This Dechloromonas aromatica (strain RCB) protein is Large ribosomal subunit protein uL15.